Reading from the N-terminus, the 371-residue chain is Carbamoyl phosphate synthase small chain (371 aa).

The segment at 1 to 190 is CPSase; it reads MRKTAILALE…LYRENEKPLV (190 aa). L-glutamine is bound by residues S47, G237, and G239. One can recognise a Glutamine amidotransferase type-1 domain in the interval 189-371; it reads LVAVIDFGVK…FKEFVKMAQG (183 aa). The active-site Nucleophile is the C264. Positions 265, 268, 306, and 309 each coordinate L-glutamine. Catalysis depends on residues H348 and E350.

Belongs to the CarA family. Composed of two chains; the small (or glutamine) chain promotes the hydrolysis of glutamine to ammonia, which is used by the large (or ammonia) chain to synthesize carbamoyl phosphate. Tetramer of heterodimers (alpha,beta)4.

It catalyses the reaction hydrogencarbonate + L-glutamine + 2 ATP + H2O = carbamoyl phosphate + L-glutamate + 2 ADP + phosphate + 2 H(+). The enzyme catalyses L-glutamine + H2O = L-glutamate + NH4(+). It participates in amino-acid biosynthesis; L-arginine biosynthesis; carbamoyl phosphate from bicarbonate: step 1/1. Its pathway is pyrimidine metabolism; UMP biosynthesis via de novo pathway; (S)-dihydroorotate from bicarbonate: step 1/3. Small subunit of the glutamine-dependent carbamoyl phosphate synthetase (CPSase). CPSase catalyzes the formation of carbamoyl phosphate from the ammonia moiety of glutamine, carbonate, and phosphate donated by ATP, constituting the first step of 2 biosynthetic pathways, one leading to arginine and/or urea and the other to pyrimidine nucleotides. The small subunit (glutamine amidotransferase) binds and cleaves glutamine to supply the large subunit with the substrate ammonia. The sequence is that of Carbamoyl phosphate synthase small chain from Aquifex aeolicus (strain VF5).